The following is a 487-amino-acid chain: Calcium-dependent mitochondrial ATP-magnesium/phosphate carrier protein 2 (487 aa).

Residues 1-211 (MEATKSSKQN…ISKHIKRSNY (211 aa)) are Mitochondrial intermembrane-facing. EF-hand domains follow at residues 36-71 (ERDL…LQIP), 72-107 (SGYK…KELE), 108-138 (LYRI…AGIE), and 139-174 (IKDE…YPHE). Ca(2+) is bound by residues Asp85, Asn87, Asp89, Arg91, and Glu96. 4 residues coordinate Ca(2+): Asp152, Asp154, Asp156, and Glu163. Solcar repeat units follow at residues 206 to 289 (IKRS…FKNA), 301 to 389 (IGTT…LKDL), and 400 to 483 (PGPL…MKKS). A helical membrane pass occupies residues 212 to 229 (FIAGGIAGAASRTATAPL). The Mitochondrial matrix portion of the chain corresponds to 230–263 (DRLKVLLQIQKTDARIREAIKLIWKQGGVRGFFR). A helical transmembrane segment spans residues 264-283 (GNGLNIVKVAPESAIKFYAY). At 284–310 (ELFKNAIGENMGEDKADIGTTVRLFAG) the chain is on the mitochondrial intermembrane side. A helical transmembrane segment spans residues 311–324 (GMAGAVAQASIYPL). The Mitochondrial matrix portion of the chain corresponds to 325–363 (DLVKTRLQTYTSQAGVAVPRLGTLTKDILVHEGPRAFYK). Residues 364–383 (GLFPSLLGIIPYAGIDLAAY) form a helical membrane-spanning segment. Residues 384 to 405 (ETLKDLSRTYILQDAEPGPLVQ) lie on the Mitochondrial intermembrane side of the membrane. Residues 406–423 (LGCGTISGALGATCVYPL) form a helical membrane-spanning segment. At 424–457 (QVVRTRMQAERARTSMSGVFRRTISEEGYRALYK) the chain is on the mitochondrial matrix side. Residues 458 to 477 (GLLPNLLKVVPAASITYMVY) traverse the membrane as a helical segment. The Mitochondrial intermembrane portion of the chain corresponds to 478 to 487 (EAMKKSLELD).

The protein belongs to the mitochondrial carrier (TC 2.A.29) family. In terms of tissue distribution, expressed in flowers, leaves, stems, roots and seedlings, mostly in aerial parts.

Its subcellular location is the mitochondrion inner membrane. With respect to regulation, counter-exchange transport activity is saturable and inhibited by pyridoxal-5'-phosphate, EDTA and EGTA. Activated by calcium Ca(2+) and manganese Mn(2+) ions, and slightly by iron Fe(2+) and zinc Zn(2+) ions. Repressed by copper ions Cu(2+) and slightly by magnesium Mg(2+) ions. Magnesium Mg(2+) ions promotes slightly ATP uptake, ATP-Mg(2+) being exchanged with ATP(4-). Calcium-dependent mitochondrial carrier protein that catalyzes the import of ATP co-transported with metal divalent cations across the mitochondrial inner membrane in exchange for phosphate (Pi). Can transport phosphate, AMP, ADP, ATP, adenosine 5'-phosphosulfate, sulfate and thiosulfate, and, to a lesser extent, other nucleotides. Binds calcium ions Ca(2+). Also mediates calcium uptake. This is Calcium-dependent mitochondrial ATP-magnesium/phosphate carrier protein 2 from Arabidopsis thaliana (Mouse-ear cress).